We begin with the raw amino-acid sequence, 541 residues long: Membrane protein insertase YidC (541 aa).

Helical transmembrane passes span 6-26, 326-346, 349-369, 420-440, 457-477, and 500-520; these read NLLL…WESD, VVDY…LMFF, LVHN…GLLY, GGCL…WVLL, LSVQ…MWAM, and MIFT…WLVG.

This sequence belongs to the OXA1/ALB3/YidC family. Type 1 subfamily. As to quaternary structure, interacts with the Sec translocase complex via SecD. Specifically interacts with transmembrane segments of nascent integral membrane proteins during membrane integration.

Its subcellular location is the cell inner membrane. Required for the insertion and/or proper folding and/or complex formation of integral membrane proteins into the membrane. Involved in integration of membrane proteins that insert both dependently and independently of the Sec translocase complex, as well as at least some lipoproteins. Aids folding of multispanning membrane proteins. This is Membrane protein insertase YidC from Shewanella amazonensis (strain ATCC BAA-1098 / SB2B).